We begin with the raw amino-acid sequence, 356 residues long: MEGPAFSKPLKDKINPWGPLIVLGILIRAGVSVQRDSPHQVFNVTWRVTNLMTGQTANATSLLGTMTDAFPKLYFDLCDLIGNDWDETRLGCRTPGEGKRARTFDLYVCPGHTVPTGCGGPREGYCGKWGCETTGQAYWKPSSSWDLISLKRGNTPKDRGPCYDSSVSSGVQGATPGGRCNPLVLKFTDAGKKASWDAPKVWGLRLYRSTGTDPVTRFSLTRQVLNIGPRVPIGPNPVISDQLPPSRPAQIMLPRPPQPPPPGTASIVPETAPPSQQPGTRDRLLNLVNKAYQALNLTSPDKTQECWLCLVSRPPYYEGVAVLGTNSNHTTLISTIMGLLIILLLLLILLLWTLHS.

Residues 1–32 (MEGPAFSKPLKDKINPWGPLIVLGILIRAGVS) form the signal peptide. Topologically, residues 33-331 (VQRDSPHQVF…VLGTNSNHTT (299 aa)) are virion surface. N-linked (GlcNAc...) asparagine; by host glycosylation is found at Asn43 and Asn58. Positions 247–279 (RPAQIMLPRPPQPPPPGTASIVPETAPPSQQPG) are disordered. Residues 254 to 263 (PRPPQPPPPG) show a composition bias toward pro residues. N-linked (GlcNAc...) asparagine; by host glycosylation occurs at Asn296. A CXXC motif is present at residues 306–309 (CWLC). Residue Asn328 is glycosylated (N-linked (GlcNAc...) asparagine; by host). Residues 332 to 352 (LISTIMGLLIILLLLLILLLW) form a helical membrane-spanning segment. At 353 to 356 (TLHS) the chain is on the intravirion side.

In terms of assembly, homooligomer. Forms heterooligomers with mouse EPOR, probably via their respective transmembrane domains. BB6 deletion mutant does not interact with mouse MST1R isoform sf-Stk.

It localises to the host endoplasmic reticulum membrane. It is found in the host cell membrane. Its subcellular location is the virion membrane. This envelope-like membrane glycoprotein is responsible for ligand-independent activation of the erythropoietin receptor EPOR leading to the abnormally rapid proliferation of erythroid precursor cells. In the first stage of Friend disease, constitutive activation of the EPOR by gp42 causes uncontrolled, polyclonal proliferation of infected erythroblasts, leading to polycythemia (massive increase in the number of mature red cells). Host susceptibility to SSFV-induced erythroblastosis usually depends on the expression of the truncated isoform of MST1R receptor tyrosine kinase (MST1R isoform sf-Stk), but the deletion mutant BB6 apparently can overcome its absence. The polypeptide is Glycoprotein 42 (env) (Mus musculus (Mouse)).